The primary structure comprises 947 residues: MSEMVDLKEFLAELGKTQKELKNVIEQAKDIGLELKTNSKMTPEQAGKLYKYIVDGIKEQIQANQPAKNPEQDNKDDLNTAVASKSLNKKVFKTPKKEETKSQPKPKKTKEKKKEAPTPIAKKKGGIEIVNTFEDQTPPVENAPKVVSHSQIEKAKQKLQEIQKSREALNKLTQSNANNANSTNNANNAKKEISEVKKQEQEIKRHENIKRRTGFRVIKRNDETENETENSVTESKKPTQSAAAIFEDIKKEWQEKDKQEAKKVKKPSKPKATPTAKNNKSHKIDFSDARDFKGNDIYDDETDEILLFDLHEQDNLNKEEEEKEIRQNINDRVRVQRKNPWMNESGIKRQSKKKRAFRNDNSQKVIQSAIAIPEEVRVYEFAQKANLNLADVIKTLFNLGLMVTKNDFLDKDSIEILAEEFHLEISVQNTLEEFEVEEVLEGVKKERPPVVTIMGHVDHGKTSLLDKIRDKRVAHTEAGGITQHIGAYMVEKNNKWVSFIDTPGHEAFSQMRNRGAQVTDIAVIVIAADDGVKQQTIEALEHAKAANVPVIFAMNKMDKPNVNPDKLKAECAELGYNPVDWGGEHEFIPVSAKTGDGIDNLLETILIQADIMELKAIEEGSARAVVLEGSVEKGRGAVATVIVQSGTLSVGDSFFAETAFGKVRTMTDDQGKSIQNLKPSMVALITGLSEVPPAGSVLIGVENDSIARLQAQKRATYLHQKALSKSTKVSFDELSEMVANKELKNIPVVIKADTQGSLEAIKNSLLELNNEEVAIQVIHSGVGGITENDLSLVSNSEHAVILGFNIRPTGNVKNKAKEYNVSIKTYTVIYALIEEMRSLLLGLMSPIIEEEHTGQAEVRETFNIPKVGTIAGCVVSDGVIARGIKARLIRDGVVIHTGEILSLKRFKDDVKEVSKGYECGIMLDNYNEIKVGDVFETYKEIHKKRTL.

The tract at residues 61 to 284 is disordered; that stretch reads IQANQPAKNP…TAKNNKSHKI (224 aa). The span at 151-169 shows a compositional bias: basic and acidic residues; that stretch reads QIEKAKQKLQEIQKSREAL. Residues 175–188 show a composition bias toward low complexity; sequence SNANNANSTNNANN. The span at 189–206 shows a compositional bias: basic and acidic residues; the sequence is AKKEISEVKKQEQEIKRH. Over residues 207–218 the composition is skewed to basic residues; that stretch reads ENIKRRTGFRVI. The span at 247 to 262 shows a compositional bias: basic and acidic residues; that stretch reads EDIKKEWQEKDKQEAK. Positions 446–615 constitute a tr-type G domain; sequence ERPPVVTIMG…LIQADIMELK (170 aa). The G1 stretch occupies residues 455-462; it reads GHVDHGKT. Residue 455–462 participates in GTP binding; the sequence is GHVDHGKT. The tract at residues 480-484 is G2; it reads GITQH. The G3 stretch occupies residues 501 to 504; that stretch reads DTPG. Residues 501–505 and 555–558 each bind GTP; these read DTPGH and NKMD. Positions 555-558 are G4; it reads NKMD. The G5 stretch occupies residues 591-593; that stretch reads SAK.

Belongs to the TRAFAC class translation factor GTPase superfamily. Classic translation factor GTPase family. IF-2 subfamily.

The protein localises to the cytoplasm. One of the essential components for the initiation of protein synthesis. Protects formylmethionyl-tRNA from spontaneous hydrolysis and promotes its binding to the 30S ribosomal subunits. Also involved in the hydrolysis of GTP during the formation of the 70S ribosomal complex. This chain is Translation initiation factor IF-2, found in Helicobacter pylori (strain P12).